Here is a 139-residue protein sequence, read N- to C-terminus: Nucleoside diphosphate kinase (139 aa).

Positions 9, 57, 85, 91, 102, and 112 each coordinate ATP. Catalysis depends on His-115, which acts as the Pros-phosphohistidine intermediate.

It belongs to the NDK family. In terms of assembly, homotetramer. It depends on Mg(2+) as a cofactor.

It localises to the cytoplasm. The catalysed reaction is a 2'-deoxyribonucleoside 5'-diphosphate + ATP = a 2'-deoxyribonucleoside 5'-triphosphate + ADP. The enzyme catalyses a ribonucleoside 5'-diphosphate + ATP = a ribonucleoside 5'-triphosphate + ADP. Major role in the synthesis of nucleoside triphosphates other than ATP. The ATP gamma phosphate is transferred to the NDP beta phosphate via a ping-pong mechanism, using a phosphorylated active-site intermediate. This Desulfosudis oleivorans (strain DSM 6200 / JCM 39069 / Hxd3) (Desulfococcus oleovorans) protein is Nucleoside diphosphate kinase.